The sequence spans 360 residues: DNA primase large subunit PriL (360 aa).

Residues Cys237, Cys309, Cys318, and Cys325 each coordinate [4Fe-4S] cluster. Residues Asp340–Asp360 form a disordered region.

This sequence belongs to the eukaryotic-type primase large subunit family. As to quaternary structure, heterodimer of a small subunit (PriS) and a large subunit (PriL). [4Fe-4S] cluster serves as cofactor.

Its function is as follows. Regulatory subunit of DNA primase, an RNA polymerase that catalyzes the synthesis of short RNA molecules used as primers for DNA polymerase during DNA replication. Stabilizes and modulates the activity of the small subunit, increasing the rate of DNA synthesis, and conferring RNA synthesis capability. The DNA polymerase activity may enable DNA primase to also catalyze primer extension after primer synthesis. May also play a role in DNA repair. The protein is DNA primase large subunit PriL of Halobacterium salinarum (strain ATCC 29341 / DSM 671 / R1).